Here is a 280-residue protein sequence, read N- to C-terminus: 4-deoxy-L-threo-5-hexosulose-uronate ketol-isomerase 1 (280 aa).

Zn(2+) is bound by residues His198, His200, Glu205, and His247.

Belongs to the KduI family. Zn(2+) serves as cofactor.

The enzyme catalyses 5-dehydro-4-deoxy-D-glucuronate = 3-deoxy-D-glycero-2,5-hexodiulosonate. It participates in glycan metabolism; pectin degradation; 2-dehydro-3-deoxy-D-gluconate from pectin: step 4/5. In terms of biological role, catalyzes the isomerization of 5-dehydro-4-deoxy-D-glucuronate to 3-deoxy-D-glycero-2,5-hexodiulosonate. This is 4-deoxy-L-threo-5-hexosulose-uronate ketol-isomerase 1 (kduI1) from Bacteroides thetaiotaomicron (strain ATCC 29148 / DSM 2079 / JCM 5827 / CCUG 10774 / NCTC 10582 / VPI-5482 / E50).